A 931-amino-acid chain; its full sequence is Isoleucine--tRNA ligase (931 aa).

Positions 57 to 67 match the 'HIGH' region motif; it reads PYANGNIHIGH. Glu555 is a binding site for L-isoleucyl-5'-AMP. Positions 596–600 match the 'KMSKS' region motif; sequence KMSKS. Lys599 contacts ATP. Positions 890, 893, 910, and 913 each coordinate Zn(2+).

It belongs to the class-I aminoacyl-tRNA synthetase family. IleS type 1 subfamily. As to quaternary structure, monomer. The cofactor is Zn(2+).

It localises to the cytoplasm. The catalysed reaction is tRNA(Ile) + L-isoleucine + ATP = L-isoleucyl-tRNA(Ile) + AMP + diphosphate. Functionally, catalyzes the attachment of isoleucine to tRNA(Ile). As IleRS can inadvertently accommodate and process structurally similar amino acids such as valine, to avoid such errors it has two additional distinct tRNA(Ile)-dependent editing activities. One activity is designated as 'pretransfer' editing and involves the hydrolysis of activated Val-AMP. The other activity is designated 'posttransfer' editing and involves deacylation of mischarged Val-tRNA(Ile). This is Isoleucine--tRNA ligase from Limosilactobacillus reuteri subsp. reuteri (strain JCM 1112) (Lactobacillus reuteri).